A 152-amino-acid polypeptide reads, in one-letter code: Large ribosomal subunit protein uL15 (152 aa).

Residues 1–57 form a disordered region; it reads MTSTLNTLKSNSGSRKKKLRKGRGIAAGQGASCGFGMRGQKSRSGRPTRPGFEGGQM. Basic residues predominate over residues 14 to 23; it reads SRKKKLRKGR. Gly residues predominate over residues 25–37; the sequence is IAAGQGASCGFGM.

Belongs to the universal ribosomal protein uL15 family. In terms of assembly, part of the 50S ribosomal subunit.

Binds to the 23S rRNA. This chain is Large ribosomal subunit protein uL15, found in Prochlorococcus marinus (strain MIT 9215).